Here is a 459-residue protein sequence, read N- to C-terminus: Exodeoxyribonuclease 7 large subunit (459 aa).

It belongs to the XseA family. Heterooligomer composed of large and small subunits.

Its subcellular location is the cytoplasm. It carries out the reaction Exonucleolytic cleavage in either 5'- to 3'- or 3'- to 5'-direction to yield nucleoside 5'-phosphates.. Bidirectionally degrades single-stranded DNA into large acid-insoluble oligonucleotides, which are then degraded further into small acid-soluble oligonucleotides. The sequence is that of Exodeoxyribonuclease 7 large subunit from Pseudomonas fluorescens (strain Pf0-1).